The following is a 502-amino-acid chain: Lysine--tRNA ligase (502 aa).

Residues Glu-399 and Glu-406 each coordinate Mg(2+).

It belongs to the class-II aminoacyl-tRNA synthetase family. In terms of assembly, homodimer. Mg(2+) is required as a cofactor.

It is found in the cytoplasm. It carries out the reaction tRNA(Lys) + L-lysine + ATP = L-lysyl-tRNA(Lys) + AMP + diphosphate. The protein is Lysine--tRNA ligase of Synechococcus sp. (strain RCC307).